A 158-amino-acid polypeptide reads, in one-letter code: 3-hydroxyacyl-[acyl-carrier-protein] dehydratase FabZ (158 aa).

H57 is an active-site residue.

This sequence belongs to the thioester dehydratase family. FabZ subfamily.

Its subcellular location is the cytoplasm. It catalyses the reaction a (3R)-hydroxyacyl-[ACP] = a (2E)-enoyl-[ACP] + H2O. In terms of biological role, involved in unsaturated fatty acids biosynthesis. Catalyzes the dehydration of short chain beta-hydroxyacyl-ACPs and long chain saturated and unsaturated beta-hydroxyacyl-ACPs. The protein is 3-hydroxyacyl-[acyl-carrier-protein] dehydratase FabZ of Anaeromyxobacter sp. (strain Fw109-5).